A 257-amino-acid chain; its full sequence is 3-deoxy-manno-octulosonate cytidylyltransferase (257 aa).

This sequence belongs to the KdsB family.

The protein resides in the cytoplasm. It catalyses the reaction 3-deoxy-alpha-D-manno-oct-2-ulosonate + CTP = CMP-3-deoxy-beta-D-manno-octulosonate + diphosphate. The protein operates within nucleotide-sugar biosynthesis; CMP-3-deoxy-D-manno-octulosonate biosynthesis; CMP-3-deoxy-D-manno-octulosonate from 3-deoxy-D-manno-octulosonate and CTP: step 1/1. Its pathway is bacterial outer membrane biogenesis; lipopolysaccharide biosynthesis. Its function is as follows. Activates KDO (a required 8-carbon sugar) for incorporation into bacterial lipopolysaccharide in Gram-negative bacteria. The polypeptide is 3-deoxy-manno-octulosonate cytidylyltransferase (Chromohalobacter salexigens (strain ATCC BAA-138 / DSM 3043 / CIP 106854 / NCIMB 13768 / 1H11)).